A 59-amino-acid chain; its full sequence is DNA-directed RNA polymerase subunit Rpo6 (59 aa).

The protein belongs to the archaeal Rpo6/eukaryotic RPB6 RNA polymerase subunit family. In terms of assembly, part of the RNA polymerase complex.

The protein localises to the cytoplasm. The catalysed reaction is RNA(n) + a ribonucleoside 5'-triphosphate = RNA(n+1) + diphosphate. DNA-dependent RNA polymerase (RNAP) catalyzes the transcription of DNA into RNA using the four ribonucleoside triphosphates as substrates. The sequence is that of DNA-directed RNA polymerase subunit Rpo6 from Halorubrum lacusprofundi (strain ATCC 49239 / DSM 5036 / JCM 8891 / ACAM 34).